Here is a 525-residue protein sequence, read N- to C-terminus: 2,3-bisphosphoglycerate-independent phosphoglycerate mutase (525 aa).

Mn(2+)-binding residues include Asp-15 and Ser-65. Ser-65 acts as the Phosphoserine intermediate in catalysis. Substrate-binding positions include His-126, 156 to 157, Arg-188, Arg-194, 258 to 261, and Lys-331; these read RD and RPDR. The Mn(2+) site is built by Asp-398, His-402, Asp-439, His-440, and His-457.

The protein belongs to the BPG-independent phosphoglycerate mutase family. As to quaternary structure, monomer. Mn(2+) serves as cofactor.

It catalyses the reaction (2R)-2-phosphoglycerate = (2R)-3-phosphoglycerate. Its pathway is carbohydrate degradation; glycolysis; pyruvate from D-glyceraldehyde 3-phosphate: step 3/5. Functionally, catalyzes the interconversion of 2-phosphoglycerate and 3-phosphoglycerate. The chain is 2,3-bisphosphoglycerate-independent phosphoglycerate mutase from Picosynechococcus sp. (strain ATCC 27264 / PCC 7002 / PR-6) (Agmenellum quadruplicatum).